Reading from the N-terminus, the 764-residue chain is 1,4-alpha-glucan branching enzyme GlgB (764 aa).

D434 (nucleophile) is an active-site residue. The active-site Proton donor is the E487.

This sequence belongs to the glycosyl hydrolase 13 family. GlgB subfamily. As to quaternary structure, monomer.

The enzyme catalyses Transfers a segment of a (1-&gt;4)-alpha-D-glucan chain to a primary hydroxy group in a similar glucan chain.. It functions in the pathway glycan biosynthesis; glycogen biosynthesis. Functionally, catalyzes the formation of the alpha-1,6-glucosidic linkages in glycogen by scission of a 1,4-alpha-linked oligosaccharide from growing alpha-1,4-glucan chains and the subsequent attachment of the oligosaccharide to the alpha-1,6 position. This Nostoc sp. (strain PCC 7120 / SAG 25.82 / UTEX 2576) protein is 1,4-alpha-glucan branching enzyme GlgB.